We begin with the raw amino-acid sequence, 1442 residues long: Chitin synthase regulator SKT5 (1442 aa).

2 disordered regions span residues 1 to 54 (MTHP…SPTL) and 72 to 117 (LALK…RHLQ). The segment covering 12 to 25 (NGKEPEKEEPRCVH) has biased composition (basic and acidic residues). Residues 39–53 (KSSSAITNENVSSPT) show a composition bias toward polar residues. Positions 75-99 (KEPENGKNKHPDSEQDDGDMKEQRS) are enriched in basic and acidic residues. 7 Sel1-like repeats span residues 198-236 (VESQ…KRGH), 237-272 (PDAA…SRKH), 273-309 (PGAQ…ENAT), 313-350 (PHAL…EMGY), 351-387 (APSA…QQNH), 388-425 (KEAC…EQGL), and 426-461 (AKAE…EHGD). The segment at 550-1402 (EKPKTATPTS…FSTPDSSSSK (853 aa)) is disordered. Positions 605–617 (PKPPTPPPPPPPE) are enriched in pro residues. Residues 633–648 (FKSRLLRLGKMGKIRK) are compositionally biased toward basic residues. Residues 747-758 (GPSSAAGADGAP) show a composition bias toward low complexity. Composition is skewed to basic and acidic residues over residues 762-804 (GEPK…KSEK), 821-840 (GSDK…KPSD), and 859-875 (RPDE…KDSE). Positions 876–891 (STSPSSPKPTTGSAEP) are enriched in low complexity. Pro residues-rich tracts occupy residues 964-977 (PFPP…PPNA), 1139-1158 (RPGP…PSRP), and 1200-1220 (AMQP…PTGP). Residues 1232 to 1243 (PSQSSMHQSGNG) are compositionally biased toward polar residues. Positions 1271 to 1282 (PRPPRPTSPPPF) are enriched in pro residues. The span at 1295–1305 (RGVMPPGSGPS) shows a compositional bias: low complexity. Composition is skewed to pro residues over residues 1306-1322 (MRPP…PRSP) and 1371-1386 (DRPP…PPKT). The span at 1392-1402 (GFSTPDSSSSK) shows a compositional bias: polar residues.

Belongs to the SKT5 family.

It localises to the cell membrane. Functionally, activator of the chitin synthase CHS3 which polymerizes chitin, a structural polymer of the fungal cell wall. This Malassezia restricta (strain ATCC 96810 / NBRC 103918 / CBS 7877) (Seborrheic dermatitis infection agent) protein is Chitin synthase regulator SKT5.